Reading from the N-terminus, the 435-residue chain is Tol-Pal system protein TolB (435 aa).

The N-terminal stretch at M1–A24 is a signal peptide.

This sequence belongs to the TolB family. The Tol-Pal system is composed of five core proteins: the inner membrane proteins TolA, TolQ and TolR, the periplasmic protein TolB and the outer membrane protein Pal. They form a network linking the inner and outer membranes and the peptidoglycan layer.

Its subcellular location is the periplasm. In terms of biological role, part of the Tol-Pal system, which plays a role in outer membrane invagination during cell division and is important for maintaining outer membrane integrity. The protein is Tol-Pal system protein TolB of Thioalkalivibrio sulfidiphilus (strain HL-EbGR7).